The sequence spans 357 residues: Uroporphyrinogen decarboxylase (357 aa).

Residues 34 to 38 (RQAGR), Asp83, Tyr158, Ser213, and His336 contribute to the substrate site.

Belongs to the uroporphyrinogen decarboxylase family. Homodimer.

It is found in the cytoplasm. It carries out the reaction uroporphyrinogen III + 4 H(+) = coproporphyrinogen III + 4 CO2. The protein operates within porphyrin-containing compound metabolism; protoporphyrin-IX biosynthesis; coproporphyrinogen-III from 5-aminolevulinate: step 4/4. Catalyzes the decarboxylation of four acetate groups of uroporphyrinogen-III to yield coproporphyrinogen-III. The sequence is that of Uroporphyrinogen decarboxylase from Mycolicibacterium paratuberculosis (strain ATCC BAA-968 / K-10) (Mycobacterium paratuberculosis).